The primary structure comprises 230 residues: CRP-like protein Clp (230 aa).

Position 18–139 (18–139 (PSLALDAGTI…APKILYAIGV (122 aa))) interacts with a nucleoside 3',5'-cyclic phosphate. The 73-residue stretch at 158–230 (LDVTDRIVRT…GKTVVLYGTR (73 aa)) folds into the HTH crp-type domain. Positions 190-209 (RQELARLVGCSREMAGRVLK) form a DNA-binding region, H-T-H motif.

Homodimer.

The protein resides in the cytoplasm. Allosterically inhibited by cyclic di-GMP (c-di-GMP), which binds to Clp and abolishes its ability to bind its target gene promoter. Its function is as follows. Global transcriptional regulator that regulates virulence factors production by activating or repressing the expression of a large set of genes in diffusible signal factor (DSF) pathway. The protein is CRP-like protein Clp (clp) of Xanthomonas axonopodis pv. citri (strain 306).